The following is a 120-amino-acid chain: Basic phospholipase A2 Cc2-PLA2 (120 aa).

7 disulfides stabilise this stretch: C26–C113, C28–C44, C43–C95, C49–C120, C50–C88, C57–C81, and C75–C86. Residues Y27, G29, and G31 each contribute to the Ca(2+) site. The active site involves H47. D48 is a binding site for Ca(2+). The active site involves D89.

The protein belongs to the phospholipase A2 family. Group II subfamily. D49 sub-subfamily. In terms of assembly, monomer. Ca(2+) serves as cofactor. As to expression, expressed by the venom gland.

Its subcellular location is the secreted. The catalysed reaction is a 1,2-diacyl-sn-glycero-3-phosphocholine + H2O = a 1-acyl-sn-glycero-3-phosphocholine + a fatty acid + H(+). In terms of biological role, basic phospholipase A2 that inhibits ADP-, thrombin- and arachidonic acid-induced platelet aggregation. It also exhibits anticoagulant effects upon human plasma in vitro. It induces a high hemolytic activity reaching its maximum after 24 hours. It induces a marked elevation of plasmatic levels of interleukin-6 and -10, eosinophil peroxidase and complement lytic activities and it also provokes a drastic increase of lymphocytes, monocytes and neutrophils in peripheral blood accompanied by a rapid intense migration of neutrophils to the peritoneal cavity. PLA2 catalyzes the calcium-dependent hydrolysis of the 2-acyl groups in 3-sn-phosphoglycerides. This chain is Basic phospholipase A2 Cc2-PLA2, found in Cerastes cerastes (Horned desert viper).